A 167-amino-acid polypeptide reads, in one-letter code: uncharacterized protein (167 aa).

DED domains follow at residues 2 to 75 (DLKT…NLFQ) and 93 to 167 (THVL…AKTV).

This is an uncharacterized protein from Saimiriine herpesvirus 2 (strain 11) (SaHV-2).